The chain runs to 702 residues: Methionine--tRNA ligase (702 aa).

Positions Pro23–His33 match the 'HIGH' region motif. 4 residues coordinate Zn(2+): Cys154, Cys157, Cys167, and Cys170. The 'KMSKS' region motif lies at Lys341–Ser345. Lys344 contributes to the ATP binding site. The disordered stretch occupies residues Leu562–Pro593. Over residues Ala569–Asn578 the composition is skewed to polar residues. One can recognise a tRNA-binding domain in the interval Asp599 to Arg702.

It belongs to the class-I aminoacyl-tRNA synthetase family. MetG type 1 subfamily. In terms of assembly, homodimer. Zn(2+) is required as a cofactor.

It localises to the cytoplasm. It carries out the reaction tRNA(Met) + L-methionine + ATP = L-methionyl-tRNA(Met) + AMP + diphosphate. Is required not only for elongation of protein synthesis but also for the initiation of all mRNA translation through initiator tRNA(fMet) aminoacylation. The polypeptide is Methionine--tRNA ligase (Xylella fastidiosa (strain 9a5c)).